Consider the following 68-residue polypeptide: MFTVFLLVVLATTVVSFTSDRASDDRNTNDKASRLLSHVVRGCCGSYPNAACHPCSCKDRPSYCGQGR.

The signal sequence occupies residues 1–16 (MFTVFLLVVLATTVVS). Positions 17-41 (FTSDRASDDRNTNDKASRLLSHVVR) are excised as a propeptide. Disulfide bonds link Cys-43-Cys-57, Cys-44-Cys-52, and Cys-55-Cys-64. A 4-hydroxyproline; partial mark is found at Pro-48 and Pro-54. The residue at position 61 (Pro-61) is a 4-hydroxyproline. Glutamine amide is present on Gln-66.

Belongs to the conotoxin A superfamily. Expressed by the venom duct.

It is found in the secreted. In terms of biological role, alpha-conotoxins act on postsynaptic membranes, they bind to the nicotinic acetylcholine receptors (nAChR) and thus inhibit them. This toxin has higher affinity for the adult subtype (alpha-1-beta-1-gamma-delta (CHRNA1-CHRNB1-CHRNG-CHRND) subunits) (IC(50)=2.3 nM) of the receptor than for the fetal subtype (alpha-1-beta-1-epsilon-delta (CHRNA1-CHRNB1-CHRND-CHRNE) subunits) (IC(50)=22 nM). The chain is Alpha-conotoxin PIVA from Conus purpurascens (Purple cone).